Consider the following 318-residue polypeptide: Mitochondrial thiamine pyrophosphate carrier 1 (318 aa).

Transmembrane regions (helical) follow at residues 12-28 (GTRR…GLVS), 91-107 (LMYV…YRTT), 125-141 (SFVA…ASTY), 181-197 (GCSA…GLFF), 221-237 (AAGV…VFPL), and 284-301 (GLTV…VTMW). Solcar repeat units lie at residues 12-110 (GTRR…TTQA), 120-206 (PPPA…LRPV), and 214-309 (PFGS…SLHY).

It belongs to the mitochondrial carrier (TC 2.A.29) family.

It is found in the mitochondrion inner membrane. In terms of biological role, mitochondrial transporter that mediates uptake of thiamine pyrophosphate (ThPP) into mitochondria. The polypeptide is Mitochondrial thiamine pyrophosphate carrier 1 (tpc1) (Aspergillus oryzae (strain ATCC 42149 / RIB 40) (Yellow koji mold)).